The following is a 170-amino-acid chain: MORN repeat-containing protein 5 (170 aa).

MORN repeat units follow at residues 8 to 30, 31 to 53, and 54 to 75; these read YFGEYINGRMEGSAEYILPTDTR, YIGEMKDGMFHGEGTLFFPSGSR, and FDAIWKKGLVVKGKYTFNDGLQ.

Only detected in testis (at protein level).

The protein resides in the cell projection. The protein localises to the cilium. It is found in the flagellum. The sequence is that of MORN repeat-containing protein 5 (Morn5) from Mus musculus (Mouse).